The primary structure comprises 104 residues: Flagellar hook-basal body complex protein FliE (104 aa).

The protein belongs to the FliE family.

The protein resides in the bacterial flagellum basal body. The protein is Flagellar hook-basal body complex protein FliE of Pectobacterium atrosepticum (strain SCRI 1043 / ATCC BAA-672) (Erwinia carotovora subsp. atroseptica).